The primary structure comprises 162 residues: E3 ubiquitin-protein ligase LAP (162 aa).

At 1–78 (MEGSDNTNTH…RWKCSFMYCN (78 aa)) the chain is on the cytoplasmic side. The segment at 3-61 (GSDNTNTHCWICKDEYNVSTNFCNCKNEFKIVHKNCLEEWINFSHNTKCKICNGKYNIK) adopts an RING-CH-type zinc-finger fold. Positions 11, 14, 25, 27, 35, 38, 51, and 54 each coordinate Zn(2+). A helical transmembrane segment spans residues 79 to 99 (VPAICVSLICLLLLPLTILLV). The Lumenal segment spans residues 100–121 (KFNLKSMLENIENRDLIALISA). A helical membrane pass occupies residues 122–142 (MAYSLPCVVGFITVVHILIAL). At 143–162 (YDYYLAAKSDNTTYQVYEYI) the chain is on the cytoplasmic side.

This sequence belongs to the poxviridae LAP protein family.

The protein localises to the host membrane. It is found in the host Golgi apparatus. Its subcellular location is the host trans-Golgi network membrane. It localises to the host early endosome membrane. The enzyme catalyses S-ubiquitinyl-[E2 ubiquitin-conjugating enzyme]-L-cysteine + [acceptor protein]-L-lysine = [E2 ubiquitin-conjugating enzyme]-L-cysteine + N(6)-ubiquitinyl-[acceptor protein]-L-lysine.. Its function is as follows. E3 ubiquitin-protein ligase which promotes ubiquitination and subsequent degradation of host MHC-I and CD4 molecules, presumably to prevent lysis of infected cells by cytotoxic T-lymphocytes and NK cell. Binds target molecules through transmembrane interaction. The result of this ubiquitination is the enhancement of the endocytosis of the target chain and the delivery to the lysosome, where it is proteolytically destroyed. This is E3 ubiquitin-protein ligase LAP (LW010) from Lumpy skin disease virus (LSDV).